Consider the following 274-residue polypeptide: MTTTINTPHKLIKNGIEIGDWVIHTSKNPILKSTEKEEWEKELVLNGLPEMVYGNNFIRLSNEKRDITIVFNCMDALKMLDKVADQSIKVSSSKKWEEINKGFEGQIEKSFEWTFSSPYTGTILTRGHCYSNFEKPIGLFENTTEKIDIEKLKRPDPILFFDDVLLYEDELADNGSSMLSVKIRVNNESVFLLSRFFLRVDDVICRCLDTRIYHEFGKDYLLKEVTFKESSFDIIKPYSENDPTLLTDSNFIVSKLPIKSLTTEKILLSYNDNK.

This sequence belongs to the TIP41 family.

The polypeptide is TIP41-like protein (tiprl) (Dictyostelium discoideum (Social amoeba)).